We begin with the raw amino-acid sequence, 528 residues long: Extracellular serine/threonine protein CG31145 (528 aa).

The Cytoplasmic portion of the chain corresponds to 1–12 (MAVLRTMKLKER). Residues 1 to 76 (MAVLRTMKLK…LHEFKRKFLQ (76 aa)) constitute a propeptide that is removed on maturation. The helical transmembrane segment at 13–33 (LVISLGATLVLLTLLLIVDVQ) threads the bilayer. At 34-528 (MDFGVANRHL…VDGSETDVSS (495 aa)) the chain is on the lumenal side. The tract at residues 77–130 (KSNASGSKEASTQAGASQSGGATSGQDAAAGASGGAAGPGTSRSTSTRKPTPHD) is disordered. An N-linked (GlcNAc...) asparagine glycan is attached at asparagine 79. Low complexity predominate over residues 86–107 (ASTQAGASQSGGATSGQDAAAG). A glycan (N-linked (GlcNAc...) asparagine) is linked at asparagine 173. The ATP site is built by glutamine 220, lysine 236, and glutamate 257. Residue glutamate 257 coordinates Mn(2+). Asparagine 286 carries N-linked (GlcNAc...) asparagine glycosylation. Cystine bridges form between cysteine 312-cysteine 328 and cysteine 317-cysteine 321. 339–342 (AAFL) contributes to the ATP binding site. 2 disulfides stabilise this stretch: cysteine 376–cysteine 450 and cysteine 451–cysteine 510. Residue aspartate 408 is part of the active site. Glutamate 413 provides a ligand contact to ATP. Asparagine 420 carries N-linked (GlcNAc...) asparagine glycosylation. Residue aspartate 428 participates in ATP binding. Aspartate 428 contacts Mn(2+).

It belongs to the FAM20 family. The cofactor is Mn(2+). As to expression, in embryos, prominently expressed in midline glia, salivary gland, intestine and dorsal vessel (heart). Not associated with biomineralization.

It is found in the golgi apparatus membrane. The protein localises to the secreted. The enzyme catalyses L-seryl-[protein] + ATP = O-phospho-L-seryl-[protein] + ADP + H(+). It carries out the reaction L-threonyl-[protein] + ATP = O-phospho-L-threonyl-[protein] + ADP + H(+). Its function is as follows. Golgi serine/threonine protein kinase that phosphorylates secretory pathway proteins within Ser-x-Glu/pSer motifs. The polypeptide is Extracellular serine/threonine protein CG31145 (Drosophila melanogaster (Fruit fly)).